The sequence spans 241 residues: Carboxy-S-adenosyl-L-methionine synthase (241 aa).

Residues Tyr-38, Gly-63–Ser-65, Asp-88–Asn-89, Asp-116–Ile-117, Asn-131, and Arg-198 each bind S-adenosyl-L-methionine.

Belongs to the class I-like SAM-binding methyltransferase superfamily. Cx-SAM synthase family. In terms of assembly, homodimer.

The catalysed reaction is prephenate + S-adenosyl-L-methionine = carboxy-S-adenosyl-L-methionine + 3-phenylpyruvate + H2O. In terms of biological role, catalyzes the conversion of S-adenosyl-L-methionine (SAM) to carboxy-S-adenosyl-L-methionine (Cx-SAM). This chain is Carboxy-S-adenosyl-L-methionine synthase, found in Actinobacillus pleuropneumoniae serotype 7 (strain AP76).